Here is a 709-residue protein sequence, read N- to C-terminus: Phosphoribosylformylglycinamidine synthase subunit PurL (709 aa).

The active site involves His36. Residues Tyr39 and Lys80 each coordinate ATP. Glu82 contributes to the Mg(2+) binding site. Substrate is bound by residues Ser83–His86 and Arg105. His84 serves as the catalytic Proton acceptor. Asp106 serves as a coordination point for Mg(2+). Position 226 (Gln226) interacts with substrate. Asp252 is a binding site for Mg(2+). Glu294–Gln296 serves as a coordination point for substrate. 2 residues coordinate ATP: Asp470 and Gly507. Ser510 contacts substrate.

It belongs to the FGAMS family. Monomer. Part of the FGAM synthase complex composed of 1 PurL, 1 PurQ and 2 PurS subunits.

The protein localises to the cytoplasm. It catalyses the reaction N(2)-formyl-N(1)-(5-phospho-beta-D-ribosyl)glycinamide + L-glutamine + ATP + H2O = 2-formamido-N(1)-(5-O-phospho-beta-D-ribosyl)acetamidine + L-glutamate + ADP + phosphate + H(+). It participates in purine metabolism; IMP biosynthesis via de novo pathway; 5-amino-1-(5-phospho-D-ribosyl)imidazole from N(2)-formyl-N(1)-(5-phospho-D-ribosyl)glycinamide: step 1/2. Part of the phosphoribosylformylglycinamidine synthase complex involved in the purines biosynthetic pathway. Catalyzes the ATP-dependent conversion of formylglycinamide ribonucleotide (FGAR) and glutamine to yield formylglycinamidine ribonucleotide (FGAM) and glutamate. The FGAM synthase complex is composed of three subunits. PurQ produces an ammonia molecule by converting glutamine to glutamate. PurL transfers the ammonia molecule to FGAR to form FGAM in an ATP-dependent manner. PurS interacts with PurQ and PurL and is thought to assist in the transfer of the ammonia molecule from PurQ to PurL. This Saccharolobus islandicus (strain M.16.27) (Sulfolobus islandicus) protein is Phosphoribosylformylglycinamidine synthase subunit PurL.